The primary structure comprises 307 residues: UPF0276 protein HI_1600 (307 aa).

The protein belongs to the UPF0276 family.

The protein is UPF0276 protein HI_1600 of Haemophilus influenzae (strain ATCC 51907 / DSM 11121 / KW20 / Rd).